The chain runs to 326 residues: GTP 3',8-cyclase (326 aa).

One can recognise a Radical SAM core domain in the interval 7–240; that stretch reads AFARKFYYLR…AQVFHHSDYQ (234 aa). A GTP-binding site is contributed by Arg16. 2 residues coordinate [4Fe-4S] cluster: Cys23 and Cys27. Tyr29 provides a ligand contact to S-adenosyl-L-methionine. Residue Cys30 coordinates [4Fe-4S] cluster. Arg65 is a GTP binding site. An S-adenosyl-L-methionine-binding site is contributed by Gly69. Thr96 serves as a coordination point for GTP. Ser120 provides a ligand contact to S-adenosyl-L-methionine. Lys157 contributes to the GTP binding site. Met191 serves as a coordination point for S-adenosyl-L-methionine. [4Fe-4S] cluster-binding residues include Cys254 and Cys257. 259–261 is a binding site for GTP; that stretch reads RLR. [4Fe-4S] cluster is bound at residue Cys271.

Belongs to the radical SAM superfamily. MoaA family. In terms of assembly, monomer and homodimer. The cofactor is [4Fe-4S] cluster.

It catalyses the reaction GTP + AH2 + S-adenosyl-L-methionine = (8S)-3',8-cyclo-7,8-dihydroguanosine 5'-triphosphate + 5'-deoxyadenosine + L-methionine + A + H(+). It participates in cofactor biosynthesis; molybdopterin biosynthesis. Functionally, catalyzes the cyclization of GTP to (8S)-3',8-cyclo-7,8-dihydroguanosine 5'-triphosphate. The sequence is that of GTP 3',8-cyclase from Yersinia pestis.